Consider the following 280-residue polypeptide: Phosphonoacetaldehyde hydrolase (280 aa).

D23 functions as the Nucleophile in the catalytic mechanism. Mg(2+)-binding residues include D23 and A25. Residue K64 is the Schiff-base intermediate with substrate of the active site. D197 serves as a coordination point for Mg(2+).

This sequence belongs to the HAD-like hydrolase superfamily. PhnX family. Homodimer. Requires Mg(2+) as cofactor.

It carries out the reaction phosphonoacetaldehyde + H2O = acetaldehyde + phosphate + H(+). Functionally, involved in phosphonate degradation. The chain is Phosphonoacetaldehyde hydrolase from Bordetella avium (strain 197N).